Here is a 456-residue protein sequence, read N- to C-terminus: Phosphomethylpyrimidine synthase (456 aa).

Substrate is bound by residues Asn-80, Met-109, Tyr-139, His-175, 195–197, 236–239, and Glu-275; these read SRG and DSLR. His-279 is a Zn(2+) binding site. Tyr-302 provides a ligand contact to substrate. Position 343 (His-343) interacts with Zn(2+). [4Fe-4S] cluster-binding residues include Cys-423, Cys-426, and Cys-431.

The protein belongs to the ThiC family. Requires [4Fe-4S] cluster as cofactor.

It catalyses the reaction 5-amino-1-(5-phospho-beta-D-ribosyl)imidazole + S-adenosyl-L-methionine = 4-amino-2-methyl-5-(phosphooxymethyl)pyrimidine + CO + 5'-deoxyadenosine + formate + L-methionine + 3 H(+). Its pathway is cofactor biosynthesis; thiamine diphosphate biosynthesis. In terms of biological role, catalyzes the synthesis of the hydroxymethylpyrimidine phosphate (HMP-P) moiety of thiamine from aminoimidazole ribotide (AIR) in a radical S-adenosyl-L-methionine (SAM)-dependent reaction. The polypeptide is Phosphomethylpyrimidine synthase (Synechococcus elongatus (strain ATCC 33912 / PCC 7942 / FACHB-805) (Anacystis nidulans R2)).